We begin with the raw amino-acid sequence, 82 residues long: Cytochrome c-551 (82 aa).

Heme c-binding residues include Cys12, Cys15, His16, and Met61.

In terms of processing, binds 1 heme c group covalently per subunit.

The protein is Cytochrome c-551 of Azotobacter vinelandii.